A 315-amino-acid chain; its full sequence is Protoheme IX farnesyltransferase (315 aa).

The next 9 membrane-spanning stretches (helical) occupy residues 32–52 (VMSLVVFTGLVGLVLAPGHMN), 53–73 (PVLAVISILCIAVGAGASGAL), 93–113 (IPAGIIAPNQVLAFGLTLSAF), 120–140 (LMVNWLAAALLAFTIFFYAVI), 153–173 (IVIGGAAGAFPPMIGWAAATG), 180–200 (LVLFMIIFLWTPPHFWALSLF), 226–246 (ALFYAVLMAPVGVLPWVMGFA), 249–269 (FYGVVSTLLGLAFVYYAWRLW), and 295–315 (IFAVLLFEALTFKLLAAFGVF).

This sequence belongs to the UbiA prenyltransferase family. Protoheme IX farnesyltransferase subfamily.

The protein localises to the cell inner membrane. It carries out the reaction heme b + (2E,6E)-farnesyl diphosphate + H2O = Fe(II)-heme o + diphosphate. The protein operates within porphyrin-containing compound metabolism; heme O biosynthesis; heme O from protoheme: step 1/1. Its function is as follows. Converts heme B (protoheme IX) to heme O by substitution of the vinyl group on carbon 2 of heme B porphyrin ring with a hydroxyethyl farnesyl side group. The polypeptide is Protoheme IX farnesyltransferase (Brucella canis (strain ATCC 23365 / NCTC 10854 / RM-666)).